Consider the following 1863-residue polypeptide: Calcineurin-binding protein 1 (1863 aa).

TPR repeat units follow at residues Leu30–Ser65, Phe81–Asp116, and Val118–Asn150. A disordered region spans residues Glu315 to Lys361. TPR repeat units lie at residues Ala543–Glu576, Ile602–Leu637, Ile866–Glu900, Gln955–Thr988, Glu990–Thr1009, Leu1011–Asp1031, Phe1143–Val1183, Val1226–Trp1263, Ser1264–Ala1297, Ala1306–Ala1339, Glu1377–Gly1412, and Asn1508–Arg1541. Residues Val894 to Ser923 show a composition bias toward basic and acidic residues. The tract at residues Val894–Glu941 is disordered. The disordered stretch occupies residues Lys1813–Lys1840. The span at Ala1818–Thr1832 shows a compositional bias: polar residues.

As to quaternary structure, component of the HIRA complex made of UBN1, UBN2, ASF1A, CABIN1 and HIRA. In terms of tissue distribution, expressed at low levels in seedlings.

It localises to the nucleus. Functionally, may be required for replication-independent chromatin assembly. In Arabidopsis thaliana (Mouse-ear cress), this protein is Calcineurin-binding protein 1.